A 335-amino-acid chain; its full sequence is Phosphate acyltransferase (335 aa).

Belongs to the PlsX family. Homodimer. Probably interacts with PlsY.

Its subcellular location is the cytoplasm. It catalyses the reaction a fatty acyl-[ACP] + phosphate = an acyl phosphate + holo-[ACP]. Its pathway is lipid metabolism; phospholipid metabolism. Functionally, catalyzes the reversible formation of acyl-phosphate (acyl-PO(4)) from acyl-[acyl-carrier-protein] (acyl-ACP). This enzyme utilizes acyl-ACP as fatty acyl donor, but not acyl-CoA. In Streptococcus uberis (strain ATCC BAA-854 / 0140J), this protein is Phosphate acyltransferase.